Consider the following 549-residue polypeptide: Polymorphic pseudokinase ROP5 (549 aa).

The first 24 residues, Met-1–Ala-24, serve as a signal peptide directing secretion. The region spanning Leu-234–Leu-527 is the Protein kinase domain. ATP contacts are provided by Arg-241, Asp-244, Arg-245, Ser-246, Lys-263, Met-337, Pro-338, Ala-340, Asp-343, and Asp-393. Asp-244 contacts ADP. ADP-binding residues include Ser-246, Lys-263, Met-337, Pro-338, and Ala-340. Residue Asp-393 participates in ADP binding. The Mg(2+) site is built by Asp-393 and Asp-407. The N-linked (GlcNAc...) asparagine glycan is linked to Asn-434. An intrachain disulfide couples Cys-458 to Cys-492.

It belongs to the protein kinase superfamily. Ser/Thr protein kinase family. Component of a complex at least composed of ROP18 and ROP5. Interacts with GRA7. Interacts with ROP17. Interacts with mouse IRGA6/IIGP1; the interaction results in inhibition of IRGA6/IIGP1 GTPase activity and/or oligomerization.

It localises to the secreted. It is found in the parasitophorous vacuole. Its subcellular location is the cytoplasmic vesicle. The protein localises to the secretory vesicle. The protein resides in the rhoptry. In terms of biological role, pseudokinase. Essential for virulence in the type I lineage. Mediates parasite survival in mouse monocytes. Required for the parasite ability to resist mouse innate immune effectors triggered by the IFN-gamma (IFNG). Reduces the accumulation of mouse IRGA6 (IIGP1) and IRGB6 (TGTP1/TGTP2), immunity-related GTPases (IRGs) that protect mice from infection by certain intracellular pathogens, on the parasitophorous vacuole and IRG-mediated killing of parasites by mouse cells. Regulates the activity of ROP18, an active kinase that targets IRGs to prevent IRG-mediated parasite killing by mouse cells. Acts as an allosteric inhibitor of mouse IRGA6 (IIGP1). Does not affect IFN-gamma (IFNG)-mediated parasite killing in human cells that do not possess the large variety of IRGs. The chain is Polymorphic pseudokinase ROP5 from Toxoplasma gondii.